The sequence spans 213 residues: Kynurenine formamidase (213 aa).

Position 18 (Trp-18) interacts with substrate. Positions 48, 52, and 54 each coordinate Zn(2+). The active-site Proton donor/acceptor is the His-58. The Zn(2+) site is built by His-160 and Glu-172.

Belongs to the Cyclase 1 superfamily. KynB family. Homodimer. Zn(2+) is required as a cofactor.

It carries out the reaction N-formyl-L-kynurenine + H2O = L-kynurenine + formate + H(+). Its pathway is amino-acid degradation; L-tryptophan degradation via kynurenine pathway; L-kynurenine from L-tryptophan: step 2/2. Functionally, catalyzes the hydrolysis of N-formyl-L-kynurenine to L-kynurenine, the second step in the kynurenine pathway of tryptophan degradation. The sequence is that of Kynurenine formamidase from Burkholderia pseudomallei (strain 668).